A 550-amino-acid chain; its full sequence is Putative golgin subfamily A member 6-like protein 19 (550 aa).

The span at 1 to 11 (MWPQPRLPPHP) shows a compositional bias: pro residues. Residues 1 to 77 (MWPQPRLPPH…DSATGVYGEG (77 aa)) form a disordered region. Residues 51–62 (NGSSPDTATSGG) show a composition bias toward polar residues. Positions 157-405 (SKVEQLQDET…QERLRQQDER (249 aa)) form a coiled coil. A compositionally biased stretch (basic and acidic residues) spans 467-480 (KELEKSGGAEEPRG). The interval 467-529 (KELEKSGGAE…VGTGEAAGGA (63 aa)) is disordered. Composition is skewed to low complexity over residues 484-499 (AAAARPVPGAPVPQGA) and 517-529 (GEAVGTGEAAGGA).

It belongs to the GOLGA6 family.

The polypeptide is Putative golgin subfamily A member 6-like protein 19 (GOLGA6L19) (Homo sapiens (Human)).